The chain runs to 261 residues: MQLVILRVTIFLPWCFAVPVPPAADHKGWDFVEGYFHQFFLTKKESPLLTQETQTQLLQQFHRNGTDLLDMQMHALLHQPHCGVPDGSDTSISPGRCKWNKHTLTYRIINYPHDMKPSAVKDSIYNAVSIWSNVTPLIFQQVQNGDADIKVSFWQWAHEDGWPFDGPGGILGHAFLPNSGNPGVVHFDKNEHWSASDTGYNLFLVATHEIGHSLGLQHSGNQSSIMYPTYWYHDPRTFQLSADDIQRIQHLYGEKCSSDIP.

Residues 1-17 form the signal peptide; sequence MQLVILRVTIFLPWCFA. Residues 18 to 89 constitute a propeptide that is removed on maturation; that stretch reads VPVPPAADHK…PHCGVPDGSD (72 aa). N-linked (GlcNAc...) asparagine glycosylation occurs at Asn-64. The Cysteine switch motif lies at 80–87; the sequence is PHCGVPDG. Residues Cys-82 and His-208 each coordinate Zn(2+). The active site involves Glu-209. Zn(2+)-binding residues include His-212 and His-218. Residue Asn-221 is glycosylated (N-linked (GlcNAc...) asparagine).

It belongs to the peptidase M10A family. The cofactor is Zn(2+). Ca(2+) serves as cofactor. Expressed specifically in uterus and placenta. Is also widely expressed in malignant tumors from different sources as well as in diverse tumor cell lines.

It is found in the secreted. Its subcellular location is the extracellular space. The protein resides in the extracellular matrix. Its function is as follows. May hydrolyze collagen type IV, fibronectin, fibrinogen, beta-casein, type I gelatin and alpha-1 proteinase inhibitor. Is also able to activate progelatinase B. This is Matrix metalloproteinase-26 (MMP26) from Homo sapiens (Human).